Consider the following 239-residue polypeptide: Uridylate kinase (239 aa).

Residue lysine 12–glycine 15 participates in ATP binding. Residues glycine 20 to glycine 25 form an involved in allosteric activation by GTP region. Glycine 54 serves as a coordination point for UMP. Positions 55 and 59 each coordinate ATP. UMP contacts are provided by residues aspartate 72 and threonine 133–threonine 140. Tyrosine 166 and aspartate 169 together coordinate ATP.

Belongs to the UMP kinase family. Homohexamer.

It localises to the cytoplasm. It carries out the reaction UMP + ATP = UDP + ADP. The protein operates within pyrimidine metabolism; CTP biosynthesis via de novo pathway; UDP from UMP (UMPK route): step 1/1. Its activity is regulated as follows. Allosterically activated by GTP. Inhibited by UTP. Its function is as follows. Catalyzes the reversible phosphorylation of UMP to UDP. This chain is Uridylate kinase, found in Caldicellulosiruptor saccharolyticus (strain ATCC 43494 / DSM 8903 / Tp8T 6331).